The sequence spans 349 residues: Fructose-bisphosphate aldolase 2, chloroplastic (349 aa).

Substrate-binding residues include Arg-47 and Lys-137. Glu-177 acts as the Proton acceptor in catalysis. Lys-219 acts as the Schiff-base intermediate with dihydroxyacetone-P in catalysis.

The protein belongs to the class I fructose-bisphosphate aldolase family.

It is found in the plastid. Its subcellular location is the chloroplast. It carries out the reaction beta-D-fructose 1,6-bisphosphate = D-glyceraldehyde 3-phosphate + dihydroxyacetone phosphate. Its pathway is carbohydrate degradation; glycolysis; D-glyceraldehyde 3-phosphate and glycerone phosphate from D-glucose: step 4/4. The polypeptide is Fructose-bisphosphate aldolase 2, chloroplastic (Pisum sativum (Garden pea)).